A 73-amino-acid polypeptide reads, in one-letter code: Translation initiation factor IF-1 (73 aa).

One can recognise an S1-like domain in the interval 1 to 72 (MAKEDVIEVE…TKGRITYRFI (72 aa)).

This sequence belongs to the IF-1 family. As to quaternary structure, component of the 30S ribosomal translation pre-initiation complex which assembles on the 30S ribosome in the order IF-2 and IF-3, IF-1 and N-formylmethionyl-tRNA(fMet); mRNA recruitment can occur at any time during PIC assembly.

The protein resides in the cytoplasm. Its function is as follows. One of the essential components for the initiation of protein synthesis. Stabilizes the binding of IF-2 and IF-3 on the 30S subunit to which N-formylmethionyl-tRNA(fMet) subsequently binds. Helps modulate mRNA selection, yielding the 30S pre-initiation complex (PIC). Upon addition of the 50S ribosomal subunit IF-1, IF-2 and IF-3 are released leaving the mature 70S translation initiation complex. This is Translation initiation factor IF-1 from Lactobacillus johnsonii (strain CNCM I-12250 / La1 / NCC 533).